A 393-amino-acid polypeptide reads, in one-letter code: Methylthioribose kinase (393 aa).

Residues Asn38, Lys53, and 107–109 contribute to the ATP site; that span reads EDL. Position 225 (Asp225) interacts with substrate. ATP is bound at residue 242 to 244; sequence DPE. A substrate-binding site is contributed by Arg332.

It belongs to the methylthioribose kinase family. Homodimer.

The enzyme catalyses 5-(methylsulfanyl)-D-ribose + ATP = 5-(methylsulfanyl)-alpha-D-ribose 1-phosphate + ADP + H(+). The protein operates within amino-acid biosynthesis; L-methionine biosynthesis via salvage pathway; S-methyl-5-thio-alpha-D-ribose 1-phosphate from S-methyl-5'-thioadenosine (hydrolase route): step 2/2. Functionally, catalyzes the phosphorylation of methylthioribose into methylthioribose-1-phosphate. The polypeptide is Methylthioribose kinase (Bacillus cereus (strain AH187)).